A 349-amino-acid polypeptide reads, in one-letter code: N-lysine methyltransferase KMT5A (349 aa).

The tract at residues 18 to 46 (AAVAATAPGPEMVEQRGPGRPRSDGENVF) is disordered. The residue at position 57 (S57) is a Phosphoserine. Residues 65 to 207 (RSPLQEENSV…SEERKKNELI (143 aa)) are disordered. Residues 107–119 (VKSDEQKSKDTRR) are compositionally biased toward basic and acidic residues. T138 carries the phosphothreonine modification. Positions 154 to 170 (ALKKSLKGKQAPRKKSQ) are enriched in basic residues. Basic and acidic residues predominate over residues 192-207 (SKAELQSEERKKNELI). One can recognise an SET domain in the interval 213–334 (EGMKIDLIDG…AGEELLYDYG (122 aa)). S-adenosyl-L-methionine is bound by residues 223–225 (KGR), Y268, and 295–296 (NH).

It belongs to the class V-like SAM-binding methyltransferase superfamily. Histone-lysine methyltransferase family. PR/SET subfamily. Interacts with L3MBTL1. Interacts with SIRT2 (phosphorylated form); the interaction is direct, stimulates KMT5A-mediated methyltransferase activity at histone H4 'Lys-20' (H4K20me1) and is increased in a H(2)O(2)-induced oxidative stress-dependent manner. Post-translationally, ubiquitinated and degraded by the DCX(DTL) complex.

The protein resides in the nucleus. It localises to the chromosome. It carries out the reaction L-lysyl(20)-[histone H4] + S-adenosyl-L-methionine = N(6)-methyl-L-lysyl(20)-[histone H4] + S-adenosyl-L-homocysteine + H(+). The catalysed reaction is L-lysyl-[protein] + S-adenosyl-L-methionine = N(6)-methyl-L-lysyl-[protein] + S-adenosyl-L-homocysteine + H(+). Functionally, protein-lysine N-methyltransferase that monomethylates both histones and non-histone proteins. Specifically monomethylates 'Lys-20' of histone H4 (H4K20me1). H4K20me1 is enriched during mitosis and represents a specific tag for epigenetic transcriptional repression. Mainly functions in euchromatin regions, thereby playing a central role in the silencing of euchromatic genes. Required for cell proliferation, probably by contributing to the maintenance of proper higher-order structure of DNA during mitosis. Involved in chromosome condensation and proper cytokinesis. Nucleosomes are preferred as substrate compared to free histones. Mediates monomethylation of p53/TP53 at 'Lys-382', leading to repress p53/TP53-target genes. Plays a negative role in TGF-beta response regulation and a positive role in cell migration. The polypeptide is N-lysine methyltransferase KMT5A (Mus musculus (Mouse)).